We begin with the raw amino-acid sequence, 164 residues long: Magnesium-dependent phosphatase 1 (164 aa).

Asp-11 (nucleophile) is an active-site residue. Position 11 (Asp-11) interacts with Mg(2+). Residues Leu-12 and Asp-13 each coordinate phosphate. Asp-13 provides a ligand contact to Mg(2+). The active-site Proton donor is Asp-13. A substrate-binding site is contributed by Trp-20. The phosphate site is built by Ser-69, Arg-70, and Lys-100. Arg-70 is a binding site for substrate. Mg(2+) is bound at residue Asp-123.

This sequence belongs to the HAD-like hydrolase superfamily. Mg(2+) is required as a cofactor.

It catalyses the reaction O-phospho-L-tyrosyl-[protein] + H2O = L-tyrosyl-[protein] + phosphate. With respect to regulation, inhibited by vanadate and zinc, and slightly by calcium. Functionally, magnesium-dependent phosphatase which may act as a tyrosine phosphatase. This chain is Magnesium-dependent phosphatase 1 (Mdp1), found in Mus musculus (Mouse).